Consider the following 336-residue polypeptide: MKFLDETKVYIRSGDGGAGAVSFRREKFIEFGGPDGGDGGRGGDVWVEAVNGLNTLIDFRYQQHFKAKTGTHGMGRNRTGAKGGDVTLKVPVGTQIFEEDNETLIVDMVAEGQRYRLAAGGNGGFGNAHFKSSTNQAPSWANPGLEGEEKTIWLRLKLIADAGLVGLPNAGKSTFLAACTRARPKIANYPFTTLHPNLGVATIDEKEFIIADIPGLIEGAHEGVGIGDRFLGHVERTRVLLHLVSAQEEDVAKAYKTVKHELEAYGGGLEEKPQIVALSQIDVLDEEELKAKAKALGKACGTPPLLISAVTNKGMTEALRALRSVIAAAKAGEEEA.

The region spanning 1–159 is the Obg domain; that stretch reads MKFLDETKVY…KTIWLRLKLI (159 aa). Positions 160-327 constitute an OBG-type G domain; the sequence is ADAGLVGLPN…ALRALRSVIA (168 aa). Residues 166–173, 191–195, 212–215, 279–282, and 308–310 contribute to the GTP site; these read GLPNAGKS, FTTLH, DIPG, SQID, and SAV. S173 and T193 together coordinate Mg(2+).

The protein belongs to the TRAFAC class OBG-HflX-like GTPase superfamily. OBG GTPase family. In terms of assembly, monomer. The cofactor is Mg(2+).

Its subcellular location is the cytoplasm. In terms of biological role, an essential GTPase which binds GTP, GDP and possibly (p)ppGpp with moderate affinity, with high nucleotide exchange rates and a fairly low GTP hydrolysis rate. Plays a role in control of the cell cycle, stress response, ribosome biogenesis and in those bacteria that undergo differentiation, in morphogenesis control. The chain is GTPase Obg from Rhizobium meliloti (strain 1021) (Ensifer meliloti).